A 34-amino-acid chain; its full sequence is Photosystem II reaction center protein Psb30 (34 aa).

Residues 6–26 (VIAQLVSLGVIVLVGPAVIIL) form a helical membrane-spanning segment.

This sequence belongs to the Psb30/Ycf12 family. PSII is composed of 1 copy each of membrane proteins PsbA, PsbB, PsbC, PsbD, PsbE, PsbF, PsbH, PsbI, PsbJ, PsbK, PsbL, PsbM, PsbT, PsbX, PsbY, PsbZ, Psb30/Ycf12, peripheral proteins of the oxygen-evolving complex and a large number of cofactors. It forms dimeric complexes.

The protein resides in the plastid. The protein localises to the chloroplast thylakoid membrane. Functionally, a core subunit of photosystem II (PSII), probably helps stabilize the reaction center. This is Photosystem II reaction center protein Psb30 from Pyropia yezoensis (Susabi-nori).